The primary structure comprises 198 residues: MIEFVYPHTQLVAGVDEVGRGPLVGAVVTAAVILDPARPIAGLNDSKKLSEKRRLALCEEIKEKALSWSLGRAEPHEIDELNILHATMLAMQRAVAGLHIAPEYVLIDGNRCPKLPMPAMAVVKGDSRVPEISAASILAKVTRDAEMAALDIVFPQYGFAQHKGYPTAFHLEKLAEHGATEHHRRSFGPVKRALGLAS.

One can recognise an RNase H type-2 domain in the interval 10–198 (QLVAGVDEVG…PVKRALGLAS (189 aa)). A divalent metal cation is bound by residues Asp-16, Glu-17, and Asp-108.

Belongs to the RNase HII family. Requires Mn(2+) as cofactor. It depends on Mg(2+) as a cofactor.

It localises to the cytoplasm. It carries out the reaction Endonucleolytic cleavage to 5'-phosphomonoester.. Its function is as follows. Endonuclease that specifically degrades the RNA of RNA-DNA hybrids. In Shigella boydii serotype 18 (strain CDC 3083-94 / BS512), this protein is Ribonuclease HII.